We begin with the raw amino-acid sequence, 198 residues long: DnaJ homolog subfamily C member 12 (198 aa).

M1 is modified (N-acetylmethionine). Residues 14-79 (DYYTLLGCDE…ESRARYDHWR (66 aa)) form the J domain. Residues 114-156 (EESDKTHTTKMENEECNEQRERKKEELASTAEKTEQKEPKPLE) are compositionally biased toward basic and acidic residues. The disordered stretch occupies residues 114–169 (EESDKTHTTKMENEECNEQRERKKEELASTAEKTEQKEPKPLEKSVSPQNSDSSGF). 3 positions are modified to phosphoserine: S160, S166, and S182.

In terms of assembly, interacts with HSPA8. Interacts with TPH1. Interacts with TPH2. Expressed at high levels in brain, heart, and testis, and at reduced levels in kidney and stomach.

Its subcellular location is the cytoplasm. Functionally, probable co-chaperone that participates in the proper folding of biopterin-dependent aromatic amino acid hydroxylases, which include phenylalanine-4-hydroxylase (PAH), tyrosine 3-monooxygenase (TH) and peripheral and neuronal tryptophan hydroxylases (TPH1 and TPH2). This Homo sapiens (Human) protein is DnaJ homolog subfamily C member 12 (DNAJC12).